Reading from the N-terminus, the 417-residue chain is MSRITSMLVTHKKASISEIENAWHGDVEALLKWVSSHDTVEECAVLKTCNRVEIYVVSPRGEKVLFEIAKKARVSSRIIDIHDHDESLLHLLRLASGLESMIIGEDQILGQMKELYRTAKSLGYTGWVLDTAFKKAIQVGKRVRKETAINERSVSVGSAAVDLAEQILGGLEGKSVLVIGAGETGELISKALVSKNIGSLYVTNRTFGTALSLAASLGGTAVPYEEMKRKIREADVVISATSAPHYILLKDDIERAMEGRKNKLLIIDIANPRDVDEAVREIEGVELHNIDSLKQISDENMRLRMREIERVEAIIEEELELLRAKYKRREAEELLARIYSEAEKIKEQEVRRAMNKLSAYHTLGEIEQKVLMDMSHSIVNKIFAEPTKALKSAAERGNTEMLRYAMELFRLNQEESD.

Substrate-binding positions include 48-51, S100, 105-107, and Q111; these read TCNR and EDQ. C49 functions as the Nucleophile in the catalytic mechanism. Residue 180–185 coordinates NADP(+); sequence GAGETG.

It belongs to the glutamyl-tRNA reductase family. As to quaternary structure, homodimer.

It carries out the reaction (S)-4-amino-5-oxopentanoate + tRNA(Glu) + NADP(+) = L-glutamyl-tRNA(Glu) + NADPH + H(+). It participates in porphyrin-containing compound metabolism; protoporphyrin-IX biosynthesis; 5-aminolevulinate from L-glutamyl-tRNA(Glu): step 1/2. In terms of biological role, catalyzes the NADPH-dependent reduction of glutamyl-tRNA(Glu) to glutamate 1-semialdehyde (GSA). The polypeptide is Glutamyl-tRNA reductase (Methanothrix thermoacetophila (strain DSM 6194 / JCM 14653 / NBRC 101360 / PT) (Methanosaeta thermophila)).